A 96-amino-acid polypeptide reads, in one-letter code: Co-chaperonin GroES (96 aa).

The protein belongs to the GroES chaperonin family. As to quaternary structure, heptamer of 7 subunits arranged in a ring. Interacts with the chaperonin GroEL.

It localises to the cytoplasm. Functionally, together with the chaperonin GroEL, plays an essential role in assisting protein folding. The GroEL-GroES system forms a nano-cage that allows encapsulation of the non-native substrate proteins and provides a physical environment optimized to promote and accelerate protein folding. GroES binds to the apical surface of the GroEL ring, thereby capping the opening of the GroEL channel. The sequence is that of Co-chaperonin GroES from Vibrio atlanticus (strain LGP32) (Vibrio splendidus (strain Mel32)).